Here is a 311-residue protein sequence, read N- to C-terminus: Methionyl-tRNA formyltransferase (311 aa).

109 to 112 (SLLP) contacts (6S)-5,6,7,8-tetrahydrofolate.

Belongs to the Fmt family.

The enzyme catalyses L-methionyl-tRNA(fMet) + (6R)-10-formyltetrahydrofolate = N-formyl-L-methionyl-tRNA(fMet) + (6S)-5,6,7,8-tetrahydrofolate + H(+). Functionally, attaches a formyl group to the free amino group of methionyl-tRNA(fMet). The formyl group appears to play a dual role in the initiator identity of N-formylmethionyl-tRNA by promoting its recognition by IF2 and preventing the misappropriation of this tRNA by the elongation apparatus. In Solibacter usitatus (strain Ellin6076), this protein is Methionyl-tRNA formyltransferase.